Reading from the N-terminus, the 399-residue chain is Acetate kinase (399 aa).

Asparagine 9 contacts Mg(2+). Lysine 16 lines the ATP pocket. Arginine 90 serves as a coordination point for substrate. Aspartate 147 (proton donor/acceptor) is an active-site residue. ATP contacts are provided by residues 207–211 (HLGNG), 281–283 (DFR), and 333–337 (GVGEN). Mg(2+) is bound at residue glutamate 387.

This sequence belongs to the acetokinase family. Homodimer. It depends on Mg(2+) as a cofactor. Mn(2+) is required as a cofactor.

It is found in the cytoplasm. It carries out the reaction acetate + ATP = acetyl phosphate + ADP. The protein operates within metabolic intermediate biosynthesis; acetyl-CoA biosynthesis; acetyl-CoA from acetate: step 1/2. Functionally, catalyzes the formation of acetyl phosphate from acetate and ATP. Can also catalyze the reverse reaction. This is Acetate kinase from Mycobacterium sp. (strain JLS).